The primary structure comprises 3095 residues: Centrosome-associated protein 350 (3095 aa).

Disordered stretches follow at residues 1-24 (MRSS…ETIQ) and 63-105 (TKKS…RSPL). Residues 14–24 (PRNSQSKETIQ) are compositionally biased toward polar residues. Serine 84 and serine 140 each carry phosphoserine. Disordered stretches follow at residues 219–239 (DEMP…LNNM), 251–272 (SDSS…KRQQ), and 430–493 (KILG…RAWS). The span at 228-238 (SENNSKPSLNN) shows a compositional bias: polar residues. A compositionally biased stretch (low complexity) spans 251-265 (SDSSPSSSACNSQRS). Basic and acidic residues-rich tracts occupy residues 438–457 (MEQK…ERVA) and 464–476 (GRAE…DVSH). Serine 468 is subject to Phosphoserine. The segment covering 481–491 (RSSARSRSSRA) has biased composition (low complexity). A Phosphoserine modification is found at serine 503. Disordered stretches follow at residues 538–623 (QAVR…QKNK) and 671–718 (ARQH…PPQP). 2 stretches are compositionally biased toward basic and acidic residues: residues 587–623 (YDTD…QKNK) and 690–699 (ESDKENKIQE). A coiled-coil region spans residues 596–641 (IVRQQEERRRRQHEEKKAQKEATEQKNKRLQELYRRQREAFSKAKT). Position 691 is a phosphoserine (serine 691). The segment covering 701 to 714 (PPSASSSSDLSLSE) has biased composition (low complexity). Phosphoserine occurs at positions 874 and 935. The disordered stretch occupies residues 977-996 (SVSEGPLLSEGSLSEEEERR). A compositionally biased stretch (low complexity) spans 979–988 (SEGPLLSEGS). Serine 1057 carries the phosphoserine modification. Disordered regions lie at residues 1099-1128 (YEDD…GSSL) and 1151-1265 (QHSS…SQKL). Positions 1119–1128 (LESQVDGSSL) are enriched in polar residues. Positions 1153–1168 (SSGARSAGSTRSSSAS) are enriched in low complexity. The segment covering 1194-1206 (DEEKVQSDSERGS) has biased composition (basic and acidic residues). Serine 1200 is modified (phosphoserine). Positions 1251–1265 (QKTPTSPLSPSSQKL) are enriched in low complexity. Position 1253 is a phosphothreonine (threonine 1253). Phosphoserine occurs at positions 1256 and 1259. Residues 1363–1402 (IKAQQQRHERDLALLKLKAEQEALECQRQLEETRNKTAQV) adopt a coiled-coil conformation. 4 disordered regions span residues 1490–1668 (AETD…GQDS), 1720–1739 (LRDK…QRGL), 1787–1864 (KLKS…QRRQ), and 1893–2017 (AWDK…PVKS). Positions 1503 to 1513 (QSKEGAVDSKR) are enriched in basic and acidic residues. 2 stretches are compositionally biased toward low complexity: residues 1517–1526 (SPSRDSYSES) and 1536–1545 (SSGSSRQDSP). Basic and acidic residues predominate over residues 1551-1564 (KENEKPFHGEKMES). Serine 1606 is modified (phosphoserine). Residues 1624-1640 (ESHRRFNMEKKRGHHDD) are compositionally biased toward basic and acidic residues. Phosphoserine occurs at positions 1641 and 1646. Residues 1700 to 1793 (KALKEKTKAE…LQEKLKSAGE (94 aa)) adopt a coiled-coil conformation. The segment covering 1787 to 1796 (KLKSAGEKKL) has biased composition (basic and acidic residues). Position 1812 is a phosphoserine (serine 1812). Positions 1819-1835 (ETRSPSPISISSSETSS) are enriched in low complexity. Composition is skewed to basic and acidic residues over residues 1845–1864 (SRMD…QRRQ) and 1894–1915 (WDKE…RTEQ). The stretch at 1850–1893 (KFLTKREQKLMQRRQHAEELLEWKRRLDAEEAEIQQMEKQALAA) forms a coiled coil. Serine 1930 bears the Phosphoserine mark. Positions 1980–1994 (STSPSKHSPPKSCLS) are enriched in low complexity. The span at 1999-2011 (ESSKASHRTEGHC) shows a compositional bias: basic and acidic residues. Residues 2043–2092 (IEGRIRALKDELRKRKSVVEQLKREQRKRQKERLKAQEASLLRQLETYDE) are a coiled coil. Serine 2108 carries the phosphoserine modification. 4 disordered regions span residues 2116-2155 (KTLS…GSLA), 2191-2265 (IEHL…VEDA), 2286-2427 (LSSK…EISE), and 2440-2471 (VHSE…GGTE). Residues 2133–2151 (HRSETAKTWKSVTESERSR) show a composition bias toward basic and acidic residues. The residue at position 2198 (serine 2198) is a Phosphoserine. Basic and acidic residues-rich tracts occupy residues 2202–2214 (SSRK…RDSL) and 2227–2259 (NAPD…KLES). Residues 2286–2300 (LSSKELPSDSANVQQ) are compositionally biased toward polar residues. Basic and acidic residues predominate over residues 2301 to 2331 (DLDKPATETSHEKEEALKEDQSNHSTDDRSP). The segment covering 2349–2362 (DSTCSGQLSVPKES) has biased composition (polar residues). 2 stretches are compositionally biased toward basic and acidic residues: residues 2377–2387 (ISADEISKDDS) and 2395–2407 (LRKD…DRSQ). The segment covering 2409-2420 (TRSSRSRATGSG) has biased composition (low complexity). Residues serine 2421 and serine 2450 each carry the phosphoserine modification. The span at 2455-2465 (MKSKERSDVGH) shows a compositional bias: basic and acidic residues. The region spanning 2504 to 2546 (GETDFAKGFWAGVELDKPEGNNNGTYDGIVYFVCKDKHGIFAP) is the CAP-Gly domain. Phosphothreonine is present on threonine 2671. A coiled-coil region spans residues 2700–2731 (LLDLLTREKNQLEAQLKSSISEEKKSKQQLET). A disordered region spans residues 2767–2793 (QEFLDQKKVPPQDLPQNTEEQSPSVPS). The segment covering 2780–2791 (LPQNTEEQSPSV) has biased composition (polar residues). Residues serine 2809 and serine 2818 each carry the phosphoserine modification.

As to quaternary structure, part of a ternary complex that contains CEP350, CEP43 and MAPRE1. Interacts (via C-terminus) directly with CEP43 (via N-terminus). Interacts with NR1H3, PPARA, PPARD and PPARG. Interacts directly with microtubules. Interacts with the fusion protein CEP43-FGFR1, and by doing so recruits and activates PI3K and PLC-gamma. Interacts with CYLD. Interacts with CFAP157. Interacts with CEP19 (via C-terminus). Interacts with CEP78; promoting CEP78 localization to centrosome and centriole. In terms of processing, phosphorylated during mitosis.

Its subcellular location is the cytoplasm. It is found in the cytoskeleton. It localises to the microtubule organizing center. The protein resides in the centrosome. The protein localises to the spindle. Its subcellular location is the nucleus. It is found in the centriole. It localises to the cilium basal body. Its function is as follows. Plays an essential role in centriole growth by stabilizing a procentriolar seed composed of at least, SASS6 and CPAP. Required for anchoring microtubules to the centrosomes and for the integrity of the microtubule network. Recruits PPARA to discrete subcellular compartments and thereby modulates PPARA activity. Required for ciliation. This is Centrosome-associated protein 350 from Mus musculus (Mouse).